We begin with the raw amino-acid sequence, 178 residues long: Ribosome maturation factor RimP (178 aa).

This sequence belongs to the RimP family.

It localises to the cytoplasm. In terms of biological role, required for maturation of 30S ribosomal subunits. This Cutibacterium acnes (strain DSM 16379 / KPA171202) (Propionibacterium acnes) protein is Ribosome maturation factor RimP.